A 79-amino-acid polypeptide reads, in one-letter code: Sulfur carrier protein TusA (79 aa).

Cysteine 17 acts as the Cysteine persulfide intermediate in catalysis.

It belongs to the sulfur carrier protein TusA family.

It is found in the cytoplasm. Its function is as follows. Sulfur carrier protein which probably makes part of a sulfur-relay system. The sequence is that of Sulfur carrier protein TusA from Idiomarina loihiensis (strain ATCC BAA-735 / DSM 15497 / L2-TR).